The sequence spans 256 residues: Chlorophyll a-b binding protein CP24 10A, chloroplastic (256 aa).

The next 2 helical transmembrane spans lie at 106 to 126 and 134 to 154; these read WAMA…IPWF and AIAP…MGWV.

Belongs to the ELIP/psbS family.

Its subcellular location is the plastid. It localises to the chloroplast thylakoid membrane. The polypeptide is Chlorophyll a-b binding protein CP24 10A, chloroplastic (CAP10A) (Solanum lycopersicum (Tomato)).